A 182-amino-acid polypeptide reads, in one-letter code: Epididymal-specific lipocalin-10 (182 aa).

The signal sequence occupies residues 1-19 (MKLEMALSIALALAVVSWT). 2 N-linked (GlcNAc...) asparagine glycosylation sites follow: Asn31 and Asn144. Cys85 and Cys176 are joined by a disulfide. N6-acetyllysine is present on Lys165.

Belongs to the calycin superfamily. Lipocalin family. Expressed in epididymis.

Its subcellular location is the secreted. Its function is as follows. May play a role in male fertility. May act as a retinoid carrier protein within the epididymis. The protein is Epididymal-specific lipocalin-10 (Lcn10) of Mus musculus (Mouse).